Here is a 264-residue protein sequence, read N- to C-terminus: Thymidylate synthase (264 aa).

A dUMP-binding site is contributed by R21. A (6R)-5,10-methylene-5,6,7,8-tetrahydrofolate-binding site is contributed by H51. 126-127 (RR) is a dUMP binding site. Residue C146 is the Nucleophile of the active site. DUMP is bound by residues 166 to 169 (RSCD), N177, and 207 to 209 (HLY). D169 is a binding site for (6R)-5,10-methylene-5,6,7,8-tetrahydrofolate. (6R)-5,10-methylene-5,6,7,8-tetrahydrofolate is bound at residue A263.

It belongs to the thymidylate synthase family. Bacterial-type ThyA subfamily. As to quaternary structure, homodimer.

Its subcellular location is the cytoplasm. It carries out the reaction dUMP + (6R)-5,10-methylene-5,6,7,8-tetrahydrofolate = 7,8-dihydrofolate + dTMP. The protein operates within pyrimidine metabolism; dTTP biosynthesis. In terms of biological role, catalyzes the reductive methylation of 2'-deoxyuridine-5'-monophosphate (dUMP) to 2'-deoxythymidine-5'-monophosphate (dTMP) while utilizing 5,10-methylenetetrahydrofolate (mTHF) as the methyl donor and reductant in the reaction, yielding dihydrofolate (DHF) as a by-product. This enzymatic reaction provides an intracellular de novo source of dTMP, an essential precursor for DNA biosynthesis. This is Thymidylate synthase from Aeromonas hydrophila subsp. hydrophila (strain ATCC 7966 / DSM 30187 / BCRC 13018 / CCUG 14551 / JCM 1027 / KCTC 2358 / NCIMB 9240 / NCTC 8049).